Reading from the N-terminus, the 190-residue chain is ATP synthase subunit b (190 aa).

A helical transmembrane segment spans residues 4–24 (ILAPVLSLVLIAGVASPALAA).

Belongs to the ATPase B chain family. As to quaternary structure, F-type ATPases have 2 components, F(1) - the catalytic core - and F(0) - the membrane proton channel. F(1) has five subunits: alpha(3), beta(3), gamma(1), delta(1), epsilon(1). F(0) has three main subunits: a(1), b(2) and c(10-14). The alpha and beta chains form an alternating ring which encloses part of the gamma chain. F(1) is attached to F(0) by a central stalk formed by the gamma and epsilon chains, while a peripheral stalk is formed by the delta and b chains.

It is found in the cell inner membrane. Functionally, f(1)F(0) ATP synthase produces ATP from ADP in the presence of a proton or sodium gradient. F-type ATPases consist of two structural domains, F(1) containing the extramembraneous catalytic core and F(0) containing the membrane proton channel, linked together by a central stalk and a peripheral stalk. During catalysis, ATP synthesis in the catalytic domain of F(1) is coupled via a rotary mechanism of the central stalk subunits to proton translocation. In terms of biological role, component of the F(0) channel, it forms part of the peripheral stalk, linking F(1) to F(0). The protein is ATP synthase subunit b of Ruegeria pomeroyi (strain ATCC 700808 / DSM 15171 / DSS-3) (Silicibacter pomeroyi).